Reading from the N-terminus, the 618-residue chain is uncharacterized protein (618 aa).

The segment at Met-1 to Val-45 is disordered. 2 stretches are compositionally biased toward basic and acidic residues: residues Lys-14 to Lys-27 and Asn-36 to Val-45. Residues Ser-50 and Ser-53 each carry the phosphoserine modification. Thr-54 is modified (phosphothreonine). 2 positions are modified to phosphoserine: Ser-55 and Ser-64. ABC transporter domains are found at residues Ile-76–Gln-325 and Ile-388–Asp-609. ATP is bound by residues Gly-108–Ser-115 and Gly-423–Ser-430.

Belongs to the ABC transporter superfamily.

The protein localises to the cytoplasm. This is an uncharacterized protein from Schizosaccharomyces pombe (strain 972 / ATCC 24843) (Fission yeast).